Reading from the N-terminus, the 430-residue chain is MIPREIKEVLDVVLRHNRWRRWETINLIASENVMSPLAEIFYINDFGGRYAEGTIGSRYYQGTKYVDVVEEALVKEFAEVLGAKFVDVRPISGTVANLATYFALVPEGGSVASLPIRCGGHISHSNVGGLKALRIKTVELPWDLENFNVDVDAARKVLEDKRPNLVILGGSLYLFPHPIKEVAEIAKGIGAYVLHDSAHVLGLIVGGVFPNPLREGADVITSSTHKTFPGPQGGLIATNLGDDANGQIQKAVFPTFTSNYHLHRYVATYITLVEMKLFGHEYASRVVENAKALAEALAEEGVTPVAERLGFTKTHQVAVDVSKYGGGDKVAALLEEANIIVNKNALPWDRSVVKPSGIRIGVQEMTRFGMGKDEMREIAKFIARVLRGEDPASVRRDVVDFRRGFVEVKYGFKASREVIEEVFASLNLLA.

Position 120–122 (120–122 (GHI)) interacts with (6S)-5,6,7,8-tetrahydrofolate. The residue at position 226 (Lys-226) is an N6-(pyridoxal phosphate)lysine.

The protein belongs to the SHMT family. Homodimer. Requires pyridoxal 5'-phosphate as cofactor.

Its subcellular location is the cytoplasm. It functions in the pathway amino-acid biosynthesis; glycine biosynthesis; glycine from L-serine: step 1/1. Catalyzes the reversible interconversion of serine and glycine with a modified folate serving as the one-carbon carrier. Also exhibits a pteridine-independent aldolase activity toward beta-hydroxyamino acids, producing glycine and aldehydes, via a retro-aldol mechanism. In Pyrobaculum calidifontis (strain DSM 21063 / JCM 11548 / VA1), this protein is Serine hydroxymethyltransferase.